The sequence spans 373 residues: Queuine tRNA-ribosyltransferase (373 aa).

Aspartate 93 serves as the catalytic Proton acceptor. Residues 93-97 (DSGGF), aspartate 147, glutamine 190, and glycine 219 contribute to the substrate site. The tract at residues 250–256 (GVGEPVD) is RNA binding. Aspartate 269 functions as the Nucleophile in the catalytic mechanism. An RNA binding; important for wobble base 34 recognition region spans residues 274-278 (TRLAR). Zn(2+)-binding residues include cysteine 307, cysteine 309, cysteine 312, and histidine 338.

This sequence belongs to the queuine tRNA-ribosyltransferase family. Homodimer. Within each dimer, one monomer is responsible for RNA recognition and catalysis, while the other monomer binds to the replacement base PreQ1. It depends on Zn(2+) as a cofactor.

It carries out the reaction 7-aminomethyl-7-carbaguanine + guanosine(34) in tRNA = 7-aminomethyl-7-carbaguanosine(34) in tRNA + guanine. The protein operates within tRNA modification; tRNA-queuosine biosynthesis. Functionally, catalyzes the base-exchange of a guanine (G) residue with the queuine precursor 7-aminomethyl-7-deazaguanine (PreQ1) at position 34 (anticodon wobble position) in tRNAs with GU(N) anticodons (tRNA-Asp, -Asn, -His and -Tyr). Catalysis occurs through a double-displacement mechanism. The nucleophile active site attacks the C1' of nucleotide 34 to detach the guanine base from the RNA, forming a covalent enzyme-RNA intermediate. The proton acceptor active site deprotonates the incoming PreQ1, allowing a nucleophilic attack on the C1' of the ribose to form the product. After dissociation, two additional enzymatic reactions on the tRNA convert PreQ1 to queuine (Q), resulting in the hypermodified nucleoside queuosine (7-(((4,5-cis-dihydroxy-2-cyclopenten-1-yl)amino)methyl)-7-deazaguanosine). This is Queuine tRNA-ribosyltransferase from Fusobacterium nucleatum subsp. nucleatum (strain ATCC 25586 / DSM 15643 / BCRC 10681 / CIP 101130 / JCM 8532 / KCTC 2640 / LMG 13131 / VPI 4355).